Consider the following 476-residue polypeptide: Chromosomal replication initiator protein DnaA (476 aa).

The tract at residues 1-75 (MLAPDTFWLA…TQMAENHFAR (75 aa)) is domain I, interacts with DnaA modulators. Residues 75–139 (RPVQLQLELA…AKEKQEKNPT (65 aa)) form a domain II region. The tract at residues 110 to 141 (FDAPTESAQKAPKDTKDTKDAKEKQEKNPTRL) is disordered. The segment covering 120 to 138 (APKDTKDTKDAKEKQEKNP) has biased composition (basic and acidic residues). The interval 140–356 (RLNPSFTFNT…GALKRVVAYS (217 aa)) is domain III, AAA+ region. Residues Gly-184, Gly-186, Lys-187, and Thr-188 each contribute to the ATP site. Residues 357 to 476 (RFTGHALTLD…FNTLLHILRG (120 aa)) form a domain IV, binds dsDNA region.

This sequence belongs to the DnaA family. As to quaternary structure, oligomerizes as a right-handed, spiral filament on DNA at oriC.

It localises to the cytoplasm. Plays an essential role in the initiation and regulation of chromosomal replication. ATP-DnaA binds to the origin of replication (oriC) to initiate formation of the DNA replication initiation complex once per cell cycle. Binds the DnaA box (a 9 base pair repeat at the origin) and separates the double-stranded (ds)DNA. Forms a right-handed helical filament on oriC DNA; dsDNA binds to the exterior of the filament while single-stranded (ss)DNA is stabiized in the filament's interior. The ATP-DnaA-oriC complex binds and stabilizes one strand of the AT-rich DNA unwinding element (DUE), permitting loading of DNA polymerase. After initiation quickly degrades to an ADP-DnaA complex that is not apt for DNA replication. Binds acidic phospholipids. The chain is Chromosomal replication initiator protein DnaA from Nitrosospira multiformis (strain ATCC 25196 / NCIMB 11849 / C 71).